A 147-amino-acid chain; its full sequence is Large ribosomal subunit protein uL13 (147 aa).

Belongs to the universal ribosomal protein uL13 family. In terms of assembly, part of the 50S ribosomal subunit.

This protein is one of the early assembly proteins of the 50S ribosomal subunit, although it is not seen to bind rRNA by itself. It is important during the early stages of 50S assembly. The sequence is that of Large ribosomal subunit protein uL13 from Renibacterium salmoninarum (strain ATCC 33209 / DSM 20767 / JCM 11484 / NBRC 15589 / NCIMB 2235).